Consider the following 106-residue polypeptide: ATP-dependent Clp protease adapter protein ClpS (106 aa).

The segment covering 1–10 has biased composition (basic and acidic residues); it reads MSQKTVHDQD. A disordered region spans residues 1 to 23; the sequence is MSQKTVHDQDNALLLETGNTKVA.

This sequence belongs to the ClpS family. As to quaternary structure, binds to the N-terminal domain of the chaperone ClpA.

Its function is as follows. Involved in the modulation of the specificity of the ClpAP-mediated ATP-dependent protein degradation. The protein is ATP-dependent Clp protease adapter protein ClpS of Xylella fastidiosa (strain M23).